The following is a 60-amino-acid chain: Large ribosomal subunit protein bL32 (60 aa).

The protein belongs to the bacterial ribosomal protein bL32 family.

This Borrelia duttonii (strain Ly) protein is Large ribosomal subunit protein bL32.